We begin with the raw amino-acid sequence, 675 residues long: Zinc finger protein 526 (675 aa).

3 consecutive C2H2-type zinc fingers follow at residues 56–78, 108–130, and 140–163; these read FMCS…QEQH, FQCG…QDAH, and YQCG…KTQH. The segment at 160–195 is disordered; that stretch reads KTQHLSSAADEPPSPLPPPTPPPPPPPPPPPPPPEV. Residues 171–194 are compositionally biased toward pro residues; it reads PPSPLPPPTPPPPPPPPPPPPPPE. The segment at 200 to 222 adopts a C2H2-type 4 zinc-finger fold; that stretch reads YECPECSTLCATPEEFLEHQGTH. Residues 225 to 234 show a composition bias toward basic and acidic residues; sequence SLEKEEHNGL. Residues 225–283 are disordered; sequence SLEKEEHNGLEEEEEDEEEGEEEEDDDDEETDEEEASSELTADDTGSNKSTADSAQSCG. A compositionally biased stretch (acidic residues) spans 235-261; that stretch reads EEEEEDEEEGEEEEDDDDEETDEEEAS. A compositionally biased stretch (polar residues) spans 269 to 281; sequence TGSNKSTADSAQS. 4 consecutive C2H2-type zinc fingers follow at residues 312–334, 339–361, 367–389, and 395–416; these read FHCS…GRAH, HECT…QRLH, YLCV…RRAH, and HRCR…RRTH. The interval 415 to 439 is disordered; it reads THTGKSGTPTRVATVSPAPAEPTPP. A compositionally biased stretch (polar residues) spans 418 to 427; it reads GKSGTPTRVA. 5 C2H2-type zinc fingers span residues 447-470, 477-499, 505-527, 533-555, and 578-600; these read LPCP…RAVH, HRCG…LRTH, FQCH…QLTH, YQCL…RRLH, and YYCG…QRVH. The disordered stretch occupies residues 606–625; that stretch reads LTLQPPRSPSPVPPPPPEPQ. Over residues 611-624 the composition is skewed to pro residues; sequence PRSPSPVPPPPPEP.

This sequence belongs to the krueppel C2H2-type zinc-finger protein family.

It is found in the nucleus. Its function is as follows. May be involved in transcriptional regulation. In Mus musculus (Mouse), this protein is Zinc finger protein 526 (Znf526).